The sequence spans 157 residues: Phosphopantetheine adenylyltransferase (157 aa).

S9 serves as a coordination point for substrate. ATP is bound by residues 9–10 (SF) and H17. Substrate-binding residues include K41, V73, and K87. ATP contacts are provided by residues 88 to 90 (GLR), E98, and 122 to 128 (YSFVSSS).

Belongs to the bacterial CoaD family. In terms of assembly, homohexamer. Requires Mg(2+) as cofactor.

Its subcellular location is the cytoplasm. It carries out the reaction (R)-4'-phosphopantetheine + ATP + H(+) = 3'-dephospho-CoA + diphosphate. It functions in the pathway cofactor biosynthesis; coenzyme A biosynthesis; CoA from (R)-pantothenate: step 4/5. Its function is as follows. Reversibly transfers an adenylyl group from ATP to 4'-phosphopantetheine, yielding dephospho-CoA (dPCoA) and pyrophosphate. The protein is Phosphopantetheine adenylyltransferase of Mycobacterium marinum (strain ATCC BAA-535 / M).